The sequence spans 179 residues: Translation initiation factor IF-3 (179 aa).

This sequence belongs to the IF-3 family. Monomer.

Its subcellular location is the cytoplasm. In terms of biological role, IF-3 binds to the 30S ribosomal subunit and shifts the equilibrium between 70S ribosomes and their 50S and 30S subunits in favor of the free subunits, thus enhancing the availability of 30S subunits on which protein synthesis initiation begins. The polypeptide is Translation initiation factor IF-3 (Lactococcus lactis subsp. lactis (strain IL1403) (Streptococcus lactis)).